A 141-amino-acid polypeptide reads, in one-letter code: MKRTMFKSKIHRATVTHADLHYVGSVTVDLDLLDAANILPGEQVAIVDVTNGARLETYTIAGERGSGVIGINGPAAHLVHENDTVILITYAQMTHEEARAHEPRVVHVNQDNRVIQLGNDPAQGIIPGLLRPPFALNNPAL.

S25 acts as the Schiff-base intermediate with substrate; via pyruvic acid in catalysis. Pyruvic acid (Ser) is present on S25. T57 contributes to the substrate binding site. Y58 functions as the Proton donor in the catalytic mechanism. Substrate is bound at residue 73 to 75; it reads GPA.

Belongs to the PanD family. Heterooctamer of four alpha and four beta subunits. Pyruvate serves as cofactor. Post-translationally, is synthesized initially as an inactive proenzyme, which is activated by self-cleavage at a specific serine bond to produce a beta-subunit with a hydroxyl group at its C-terminus and an alpha-subunit with a pyruvoyl group at its N-terminus.

It is found in the cytoplasm. It carries out the reaction L-aspartate + H(+) = beta-alanine + CO2. The protein operates within cofactor biosynthesis; (R)-pantothenate biosynthesis; beta-alanine from L-aspartate: step 1/1. Its function is as follows. Catalyzes the pyruvoyl-dependent decarboxylation of aspartate to produce beta-alanine. This chain is Aspartate 1-decarboxylase 1, found in Paenarthrobacter aurescens (strain TC1).